Reading from the N-terminus, the 371-residue chain is Neuropeptide S receptor (371 aa).

Residues 1–52 (MPANFTEGSFDSNGTGQMLDSSPVACTETVTFTEVVEGKEWGSFYYSFKTEQ) lie on the Extracellular side of the membrane. N-linked (GlcNAc...) asparagine glycans are attached at residues asparagine 4 and asparagine 13. A helical transmembrane segment spans residues 53–73 (LITLWVLFVFTIVGNSVVLFS). At 74–82 (TWRRKRKSR) the chain is on the cytoplasmic side. The helical transmembrane segment at 83 to 103 (MTFFVTQLAITDSFTGLVNIL) threads the bilayer. At 104 to 123 (TDIIWRFTGDFMAPDLVCRV) the chain is on the extracellular side. Cysteine 121 and cysteine 197 are oxidised to a cystine. Residues 124–144 (VRYLQVVLLYASTYVLVSLSI) form a helical membrane-spanning segment. The Cytoplasmic portion of the chain corresponds to 145 to 164 (DRYHAIVYPMKFLQGEKQAK). The chain crosses the membrane as a helical span at residues 165–185 (VLIVIAWSLSFLFSIPTLIIF). At 186–212 (GKRTLSNGEVQCWALWPDDSYWTPYMT) the chain is on the extracellular side. A helical transmembrane segment spans residues 213-233 (IVAFLVYFIPLTIISVMYGIV). Residues 234-275 (IRTIWIKSKTYETVISNCSDGKLCSSYNRGLISKAKIKAIKY) lie on the Cytoplasmic side of the membrane. Residues 276 to 296 (SIVIILAFICCWSPYFLFDIL) form a helical membrane-spanning segment. The Extracellular portion of the chain corresponds to 297-312 (DNFNLLPDTQERFYAS). The helical transmembrane segment at 313-333 (VIIQNLPALNSAINPLIYCVF) threads the bilayer. The Cytoplasmic segment spans residues 334–371 (SSSISFPCGERRSQDSIMTFRERTERHEMQILSKPEFI).

The protein belongs to the G-protein coupled receptor 1 family. Vasopressin/oxytocin receptor subfamily.

The protein localises to the cell membrane. In terms of biological role, G-protein coupled receptor for neuropeptide S (NPS). Promotes mobilization of intracellular Ca(2+) stores. Inhibits cell growth in response to NPS binding. Involved in pathogenesis of asthma and other IgE-mediated diseases. This chain is Neuropeptide S receptor (NPSR1), found in Macaca mulatta (Rhesus macaque).